Consider the following 237-residue polypeptide: Oligoribonuclease, mitochondrial (237 aa).

Residues 1-25 (MLGVSLGARLLRGVGGRRGQFGARG) constitute a mitochondrion transit peptide. The 165-residue stretch at 43–207 (MVWVDLEMTG…DDISESIKEL (165 aa)) folds into the Exonuclease domain. Mg(2+)-binding residues include aspartate 47 and glutamate 49. Serine 92 carries the phosphoserine modification. Tyrosine 122 is modified (phosphotyrosine). A Mg(2+)-binding site is contributed by aspartate 147. The residue at position 173 (lysine 173) is an N6-acetyllysine. Residue histidine 194 is part of the active site. Aspartate 199 is a Mg(2+) binding site.

It belongs to the oligoribonuclease family. As to quaternary structure, homodimer. Homotetramer. The cofactor is Mn(2+). Mg(2+) serves as cofactor.

It localises to the mitochondrion intermembrane space. It is found in the mitochondrion matrix. The protein resides in the mitochondrion. The protein localises to the cytoplasm. Its subcellular location is the nucleus. Functionally, 3'-to-5'exoribonuclease that preferentially degrades DNA and RNA oligonucleotides composed of only two nucleotides. Binds and degrades longer oligonucleotides with a lower affinity. Plays dual roles in mitochondria, scavenging nanoRNAs (small RNA oligonucleotides of &lt;5 nucleotides) that are produced by the degradosome and clearing short RNAs that are generated by RNA processing. Essential for correct initiation of mitochondrial transcription, degrading mitochondrial RNA dinucleotides to prevent RNA-primed transcription at non-canonical sites in the mitochondrial genome. Essential for embryonic development. The polypeptide is Oligoribonuclease, mitochondrial (Rexo2) (Mus musculus (Mouse)).